The sequence spans 142 residues: Protein archease (142 aa).

Ca(2+)-binding residues include Asp12, Asp141, and Ile142.

This sequence belongs to the archease family.

Its function is as follows. Activates the tRNA-splicing ligase complex by facilitating the enzymatic turnover of catalytic subunit RtcB. Acts by promoting the guanylylation of RtcB, a key intermediate step in tRNA ligation. Can also alter the NTP specificity of RtcB such that ATP, dGTP or ITP is used efficiently. The polypeptide is Protein archease (Pyrococcus furiosus (strain ATCC 43587 / DSM 3638 / JCM 8422 / Vc1)).